Here is a 150-residue protein sequence, read N- to C-terminus: Flagellar assembly factor FliW (150 aa).

Belongs to the FliW family. As to quaternary structure, interacts with translational regulator CsrA and flagellin(s).

The protein resides in the cytoplasm. Its function is as follows. Acts as an anti-CsrA protein, binds CsrA and prevents it from repressing translation of its target genes, one of which is flagellin. Binds to flagellin and participates in the assembly of the flagellum. This is Flagellar assembly factor FliW from Leptospira interrogans serogroup Icterohaemorrhagiae serovar Lai (strain 56601).